Reading from the N-terminus, the 472-residue chain is Adenosylhomocysteinase (472 aa).

Substrate-binding residues include Thr61, Asp136, and Glu196. 197–199 (TTT) contributes to the NAD(+) binding site. Positions 226 and 230 each coordinate substrate. Residues Asn231, 260–265 (GYGDVG), Glu283, Asn318, 339–341 (IGH), and Asn384 contribute to the NAD(+) site.

Belongs to the adenosylhomocysteinase family. The cofactor is NAD(+).

It is found in the cytoplasm. The enzyme catalyses S-adenosyl-L-homocysteine + H2O = L-homocysteine + adenosine. Its pathway is amino-acid biosynthesis; L-homocysteine biosynthesis; L-homocysteine from S-adenosyl-L-homocysteine: step 1/1. May play a key role in the regulation of the intracellular concentration of adenosylhomocysteine. The protein is Adenosylhomocysteinase of Cupriavidus pinatubonensis (strain JMP 134 / LMG 1197) (Cupriavidus necator (strain JMP 134)).